We begin with the raw amino-acid sequence, 234 residues long: MRQSKEERVHRVFENISAHYDRMNSVISFRRHLKWRKDVMRRMNVQKGKKALDVCCGTADWTIALAEAVGPEGKVYGLDFSENMLKVGEQKVKARGLHNVKLIHGNAMQLPFPDNSFDYVTIGFGLRNVPDYMTVLKEMHRVTKPGGITVCLETSQPTLFGFRQLYYFYFRFIMPLFGKLLAKSYEEYSWLQESAREFPGRDELAEMFRAAGFVDVEVKPYTFGVAAMHLGYKR.

S-adenosyl-L-methionine-binding positions include Thr-58, Asp-79, and 106 to 107; that span reads NA.

The protein belongs to the class I-like SAM-binding methyltransferase superfamily. MenG/UbiE family.

It carries out the reaction a 2-demethylmenaquinol + S-adenosyl-L-methionine = a menaquinol + S-adenosyl-L-homocysteine + H(+). It participates in quinol/quinone metabolism; menaquinone biosynthesis; menaquinol from 1,4-dihydroxy-2-naphthoate: step 2/2. Functionally, methyltransferase required for the conversion of demethylmenaquinol (DMKH2) to menaquinol (MKH2). This is Demethylmenaquinone methyltransferase from Geobacillus stearothermophilus (Bacillus stearothermophilus).